The chain runs to 144 residues: Large ribosomal subunit protein uL15 (144 aa).

A disordered region spans residues 1–57 (MRFNELQPAKGSRFAGKRLGRGIGSGLGKTSGKGHKGQKARSGGYHKVGFEGGQMPL). The segment covering 21–31 (RGIGSGLGKTS) has biased composition (gly residues).

The protein belongs to the universal ribosomal protein uL15 family. As to quaternary structure, part of the 50S ribosomal subunit.

Its function is as follows. Binds to the 23S rRNA. This chain is Large ribosomal subunit protein uL15, found in Dichelobacter nodosus (strain VCS1703A).